We begin with the raw amino-acid sequence, 492 residues long: RNA-binding protein Nova-2 (492 aa).

The Bipartite nuclear localization signal signature appears at 10-26 (KRPLETPPEVVCTKRSN). One can recognise a KH 1 domain in the interval 32–99 (EYFLKVLIPS…EALNAVHSFI (68 aa)). A Glycyl lysine isopeptide (Lys-Gly) (interchain with G-Cter in SUMO2) cross-link involves residue Lys112. KH domains are found at residues 130-196 (AKQA…VSAI) and 406-473 (KELV…QYLI).

As to quaternary structure, interacts with PTBP2; the interaction is direct. In terms of tissue distribution, brain. Expression restricted to astrocytes.

The protein localises to the nucleus. Its function is as follows. Functions to regulate alternative splicing in neurons by binding pre-mRNA in a sequence-specific manner to activate exon inclusion or exclusion. It binds specifically to the sequences 5'-YCAY-3' and regulates splicing in only a subset of regulated exons. Binding to an exonic 5'-YCAY-3' cluster changes the protein complexes assembled on pre-mRNA, blocking U1 snRNP binding and exon inclusion, whereas binding to an intronic 5'-YCAY-3' cluster enhances spliceosome assembly and exon inclusion. With NOVA1, they perform unique biological functions in different brain areas and cell types. Uniquely regulates alternative splicing events of a series of axon guidance related genes during cortical development, being essential for central nervous system development by regulating neural networks wiring. Regulates differentially alternative splicing on the same transcripts expressed in different neurons. This includes functional differences in transcripts expressed in cortical and cerebellar excitatory versus inhibitory neurons where is required for, respectively, development of laminar structure and motor coordination and synapse formation. Also the regulation the regulation of intron retention can sequester the trans-acting splicing factor PTBP2, acting as a variable cis-acting scaffolding platform for PTBP2 across various natural conditions. The chain is RNA-binding protein Nova-2 from Homo sapiens (Human).